The sequence spans 252 residues: 3-dehydroquinate dehydratase (252 aa).

3-dehydroquinate contacts are provided by residues Ser21, 46-48 (EWR), and Arg82. His143 (proton donor/acceptor) is an active-site residue. Lys170 acts as the Schiff-base intermediate with substrate in catalysis. 3 residues coordinate 3-dehydroquinate: Arg213, Ser232, and Gln236.

It belongs to the type-I 3-dehydroquinase family. As to quaternary structure, homodimer.

The enzyme catalyses 3-dehydroquinate = 3-dehydroshikimate + H2O. It functions in the pathway metabolic intermediate biosynthesis; chorismate biosynthesis; chorismate from D-erythrose 4-phosphate and phosphoenolpyruvate: step 3/7. In terms of biological role, involved in the third step of the chorismate pathway, which leads to the biosynthesis of aromatic amino acids. Catalyzes the cis-dehydration of 3-dehydroquinate (DHQ) and introduces the first double bond of the aromatic ring to yield 3-dehydroshikimate. In Salmonella agona (strain SL483), this protein is 3-dehydroquinate dehydratase.